Reading from the N-terminus, the 247-residue chain is Homeobox-leucine zipper protein HOX17 (247 aa).

Residues 58 to 81 form a disordered region; it reads ERAGLRGGGGSDEEDGGCGIDGSR. Residues 79 to 138 constitute a DNA-binding region (homeobox); it reads GSRKKLRLSKDQSAVLEDSFREHPTLNPRQKATLAQQLGLRPRQVEVWFQNRRARTKLKQ. Positions 137–182 are leucine-zipper; it reads KQTEVDCEFLKRCCETLTEENRRLQKEVQELRALKLVSPHLYMNMS.

This sequence belongs to the HD-ZIP homeobox family. Class II subfamily. In terms of tissue distribution, expressed in seedlings, roots, stems, leaf sheaths and blades and panicles.

The protein localises to the nucleus. In terms of biological role, probable transcription factor. The protein is Homeobox-leucine zipper protein HOX17 (HOX17) of Oryza sativa subsp. indica (Rice).